We begin with the raw amino-acid sequence, 68 residues long: Venom peptide 3 (68 aa).

Positions 1–25 are cleaved as a signal peptide; the sequence is MTKQSIVIVLFAAIAMMACLQRVTA. AXPX repeat units follow at residues 25–28, 33–36, 37–40, 41–44, and 47–50; these read AEPA, AAPI, AEPY, ANPE, and ASPE. Residues 26 to 51 constitute a propeptide that is removed on maturation; sequence EPAPEPIAAPIAEPYANPEAIASPEA. The residue at position 65 (leucine 65) is a Leucine amide.

As to expression, expressed by the venom gland.

It localises to the secreted. Its subcellular location is the target cell membrane. In terms of biological role, antimicrobial peptide with strong activity against the fungi B.cinerea (MIC=5 uM) and C.albicans (MIC=33 uM), and no activity against the Gram-negative bacterium E.coli (MIC&gt;200 uM) and the Gram-positive bacterium S.aureus (MIC&gt;200 uM). Shows cytolytic activity against insect cell lines. Has no hemolytic activity against human erythrocytes. In vivo, peptide injection in the vicinity of the head and thorax of lepidopteran larvae induces feeding disorder that lasts one or two days before recovering. The protein is Venom peptide 3 of Orancistrocerus drewseni (Solitary wasp).